We begin with the raw amino-acid sequence, 76 residues long: UPF0291 protein Aflv_1503 (76 aa).

The interval 56-76 is disordered; it reads DPNGNDVTPQKLKDSKKKRLH.

This sequence belongs to the UPF0291 family.

It localises to the cytoplasm. The protein is UPF0291 protein Aflv_1503 of Anoxybacillus flavithermus (strain DSM 21510 / WK1).